Here is a 720-residue protein sequence, read N- to C-terminus: Translation initiation factor IF-2 (720 aa).

A disordered region spans residues 48–138 (KKFKASQAKD…NEVEETKEMP (91 aa)). Low complexity-rich tracts occupy residues 60 to 75 (KQNTQNNHQKSNNKQN) and 99 to 113 (KGKQQNKNNKTNKNQ). Basic residues predominate over residues 114–123 (KNNKNKKNNK). The region spanning 222-391 (ERPAVVTIMG…GLVAEVQELK (170 aa)) is the tr-type G domain. The interval 231-238 (GHVDHGKT) is G1. Position 231–238 (231–238 (GHVDHGKT)) interacts with GTP. The interval 256–260 (GITQH) is G2. Residues 277 to 280 (DTPG) form a G3 region. GTP-binding positions include 277 to 281 (DTPGH) and 331 to 334 (NKID). Residues 331–334 (NKID) form a G4 region. The G5 stretch occupies residues 367-369 (SAL).

The protein belongs to the TRAFAC class translation factor GTPase superfamily. Classic translation factor GTPase family. IF-2 subfamily.

Its subcellular location is the cytoplasm. One of the essential components for the initiation of protein synthesis. Protects formylmethionyl-tRNA from spontaneous hydrolysis and promotes its binding to the 30S ribosomal subunits. Also involved in the hydrolysis of GTP during the formation of the 70S ribosomal complex. This chain is Translation initiation factor IF-2, found in Staphylococcus epidermidis (strain ATCC 35984 / DSM 28319 / BCRC 17069 / CCUG 31568 / BM 3577 / RP62A).